Consider the following 872-residue polypeptide: Valine--tRNA ligase (872 aa).

Positions 45-55 (PYPTGNLHIGN) match the 'HIGH' region motif. Positions 524–528 (KMSKS) match the 'KMSKS' region motif. Lys-527 contacts ATP.

Belongs to the class-I aminoacyl-tRNA synthetase family. ValS type 2 subfamily.

Its subcellular location is the cytoplasm. The catalysed reaction is tRNA(Val) + L-valine + ATP = L-valyl-tRNA(Val) + AMP + diphosphate. In terms of biological role, catalyzes the attachment of valine to tRNA(Val). As ValRS can inadvertently accommodate and process structurally similar amino acids such as threonine, to avoid such errors, it has a 'posttransfer' editing activity that hydrolyzes mischarged Thr-tRNA(Val) in a tRNA-dependent manner. This chain is Valine--tRNA ligase, found in Natronomonas pharaonis (strain ATCC 35678 / DSM 2160 / CIP 103997 / JCM 8858 / NBRC 14720 / NCIMB 2260 / Gabara) (Halobacterium pharaonis).